The primary structure comprises 252 residues: Trans-aconitate 2-methyltransferase (252 aa).

It belongs to the methyltransferase superfamily. Tam family.

The protein localises to the cytoplasm. It carries out the reaction trans-aconitate + S-adenosyl-L-methionine = (E)-3-(methoxycarbonyl)pent-2-enedioate + S-adenosyl-L-homocysteine. Catalyzes the S-adenosylmethionine monomethyl esterification of trans-aconitate. In Escherichia coli O139:H28 (strain E24377A / ETEC), this protein is Trans-aconitate 2-methyltransferase.